We begin with the raw amino-acid sequence, 302 residues long: Eukaryotic translation initiation factor 3 subunit F (302 aa).

The region spanning 23–165 (IVIEPAVLFS…IKTYVSSPVG (143 aa)) is the MPN domain. Serine 162 carries the post-translational modification Phosphoserine.

It belongs to the eIF-3 subunit F family. As to quaternary structure, component of the eukaryotic translation initiation factor 3 (eIF-3) complex. The eIF-3 complex appears to include tif32/eif3a, SPAC25G10.08/eif3b, tif33/eif3c, SPBC4C3.07/eif3f, tif35/eif3g and sum1/eif3i. This set of common subunits may also associate exclusively with either moe1/eif3d and int6/eif3e, or with SPAC821.05/eif3h and SPAC1751.03/eif3m. The eIF-3 complex may also include SPAC3A12.13c/eif3j.

It is found in the cytoplasm. Its function is as follows. Component of the eukaryotic translation initiation factor 3 (eIF-3) complex, which is involved in protein synthesis of a specialized repertoire of mRNAs and, together with other initiation factors, stimulates binding of mRNA and methionyl-tRNAi to the 40S ribosome. The eIF-3 complex specifically targets and initiates translation of a subset of mRNAs involved in cell proliferation. The polypeptide is Eukaryotic translation initiation factor 3 subunit F (Schizosaccharomyces pombe (strain 972 / ATCC 24843) (Fission yeast)).